Here is a 163-residue protein sequence, read N- to C-terminus: Putative pre-16S rRNA nuclease (163 aa).

The protein belongs to the YqgF nuclease family.

Its subcellular location is the cytoplasm. In terms of biological role, could be a nuclease involved in processing of the 5'-end of pre-16S rRNA. The chain is Putative pre-16S rRNA nuclease from Chlamydia caviae (strain ATCC VR-813 / DSM 19441 / 03DC25 / GPIC) (Chlamydophila caviae).